We begin with the raw amino-acid sequence, 294 residues long: Acetylglutamate kinase (294 aa).

Substrate is bound by residues Gly63 to Gly64, Arg85, and Asn188.

It belongs to the acetylglutamate kinase family. ArgB subfamily.

It localises to the cytoplasm. It carries out the reaction N-acetyl-L-glutamate + ATP = N-acetyl-L-glutamyl 5-phosphate + ADP. The protein operates within amino-acid biosynthesis; L-arginine biosynthesis; N(2)-acetyl-L-ornithine from L-glutamate: step 2/4. Catalyzes the ATP-dependent phosphorylation of N-acetyl-L-glutamate. The sequence is that of Acetylglutamate kinase from Methanococcus maripaludis (strain C6 / ATCC BAA-1332).